The following is a 363-amino-acid chain: UDP-N-acetylglucosamine--N-acetylmuramyl-(pentapeptide) pyrophosphoryl-undecaprenol N-acetylglucosamine transferase (363 aa).

Residues 15–17, N127, R163, S191, I244, 263–268, and Q288 each bind UDP-N-acetyl-alpha-D-glucosamine; these read TGG and ALTVSE.

The protein belongs to the glycosyltransferase 28 family. MurG subfamily.

Its subcellular location is the cell inner membrane. It catalyses the reaction di-trans,octa-cis-undecaprenyl diphospho-N-acetyl-alpha-D-muramoyl-L-alanyl-D-glutamyl-meso-2,6-diaminopimeloyl-D-alanyl-D-alanine + UDP-N-acetyl-alpha-D-glucosamine = di-trans,octa-cis-undecaprenyl diphospho-[N-acetyl-alpha-D-glucosaminyl-(1-&gt;4)]-N-acetyl-alpha-D-muramoyl-L-alanyl-D-glutamyl-meso-2,6-diaminopimeloyl-D-alanyl-D-alanine + UDP + H(+). It participates in cell wall biogenesis; peptidoglycan biosynthesis. Its function is as follows. Cell wall formation. Catalyzes the transfer of a GlcNAc subunit on undecaprenyl-pyrophosphoryl-MurNAc-pentapeptide (lipid intermediate I) to form undecaprenyl-pyrophosphoryl-MurNAc-(pentapeptide)GlcNAc (lipid intermediate II). This Pectobacterium carotovorum subsp. carotovorum (strain PC1) protein is UDP-N-acetylglucosamine--N-acetylmuramyl-(pentapeptide) pyrophosphoryl-undecaprenol N-acetylglucosamine transferase.